The sequence spans 532 residues: Flavin-containing monooxygenase 3 (532 aa).

Residues 9–13 (GAGVS), Glu-32, 40–41 (LW), and 61–62 (NS) contribute to the FAD site. NADP(+)-binding positions include 60-61 (TN) and 195-198 (SGCD). A Phosphoserine modification is found at Ser-401. Residues 510 to 530 (FFFHWLKPFAIPILLIAVFLG) form a helical membrane-spanning segment.

This sequence belongs to the FMO family. The cofactor is FAD. Liver.

It localises to the microsome membrane. It is found in the endoplasmic reticulum membrane. The catalysed reaction is trimethylamine + NADPH + O2 = trimethylamine N-oxide + NADP(+) + H2O. It carries out the reaction N,N-dimethylaniline + NADPH + O2 + H(+) = N,N-dimethylaniline N-oxide + NADP(+) + H2O. The enzyme catalyses hypotaurine + NADPH + O2 + H(+) = taurine + NADP(+) + H2O. It catalyses the reaction (S)-nicotine + NADPH + O2 = trans-(S)-nicotine N(1')-oxide + NADP(+) + H2O. The catalysed reaction is albendazole + NADPH + O2 + H(+) = albendazole S-oxide + NADP(+) + H2O. Functionally, essential hepatic enzyme that catalyzes the oxygenation of a wide variety of nitrogen- and sulfur-containing compounds including drugs as well as dietary compounds. Plays an important role in the metabolism of trimethylamine (TMA), via the production of trimethylamine N-oxide (TMAO) metabolite. TMA is generated by the action of gut microbiota using dietary precursors such as choline, choline containing compounds, betaine or L-carnitine. By regulating TMAO concentration, FMO3 directly impacts both platelet responsiveness and rate of thrombus formation. The polypeptide is Flavin-containing monooxygenase 3 (FMO3) (Macaca mulatta (Rhesus macaque)).